A 686-amino-acid polypeptide reads, in one-letter code: Endonuclease GajA (686 aa).

An ATPase domain region spans residues 1 to 423 (MYLKSLKIYN…NYVTTKNNYT (423 aa)). 52-56 (NCGKT) contributes to the ATP binding site. A toprim domain region spans residues 463-599 (FFSDAIIFVE…TSFEEAFILT (137 aa)). Residues Glu-472, Glu-476, Asp-559, and Glu-604 each contribute to the a divalent metal cation site.

As to quaternary structure, homotetramer. Forms the core of the anti-phage defense complex. Interacts with GajB; 2 GajB dimers dock at opposite sides of the GajA complex to form a 4:4 GajA-GajB assembly (GajAB). GajAB interacts with Bacillus phage Phi3T Gad1 protein; this interaction forms a 4:4:8 GajAB-Gad1 complex and leads to GajAB inhibition. The cofactor is Mg(2+).

Component of antiviral defense system Gabija type II, composed of GajA and GajB. Probably a nicking endonuclease that is strongly inhibited by physiological levels of nucleotides (NTP and dNTP). Expression of Gabija type II in B.subtilis (strain BEST7003) confers resistance to phages phi105, and SpBeta. During viral replication, when nucleotides are rapidly consumed, it is de-suppressed and degrades target DNA. The protein is Endonuclease GajA of Bacillus cereus (strain HuB5-5).